Consider the following 361-residue polypeptide: Chorismate synthase (361 aa).

Residues 40 to 49 are compositionally biased toward basic and acidic residues; sequence DLQHDLDRRR. Residues 40–60 are disordered; it reads DLQHDLDRRRPGTSRHTTQRR. Positions 48 and 54 each coordinate NADP(+). Residues 125–127, 237–238, Gly-277, 292–296, and Arg-318 contribute to the FMN site; these read RSS, NA, and KPTSS.

It belongs to the chorismate synthase family. As to quaternary structure, homotetramer. It depends on FMNH2 as a cofactor.

It catalyses the reaction 5-O-(1-carboxyvinyl)-3-phosphoshikimate = chorismate + phosphate. It participates in metabolic intermediate biosynthesis; chorismate biosynthesis; chorismate from D-erythrose 4-phosphate and phosphoenolpyruvate: step 7/7. In terms of biological role, catalyzes the anti-1,4-elimination of the C-3 phosphate and the C-6 proR hydrogen from 5-enolpyruvylshikimate-3-phosphate (EPSP) to yield chorismate, which is the branch point compound that serves as the starting substrate for the three terminal pathways of aromatic amino acid biosynthesis. This reaction introduces a second double bond into the aromatic ring system. The sequence is that of Chorismate synthase from Chromohalobacter salexigens (strain ATCC BAA-138 / DSM 3043 / CIP 106854 / NCIMB 13768 / 1H11).